The chain runs to 156 residues: Small ribosomal subunit protein uS7 (156 aa).

This sequence belongs to the universal ribosomal protein uS7 family. As to quaternary structure, part of the 30S ribosomal subunit. Contacts proteins S9 and S11.

Functionally, one of the primary rRNA binding proteins, it binds directly to 16S rRNA where it nucleates assembly of the head domain of the 30S subunit. Is located at the subunit interface close to the decoding center, probably blocks exit of the E-site tRNA. The sequence is that of Small ribosomal subunit protein uS7 from Solidesulfovibrio magneticus (strain ATCC 700980 / DSM 13731 / RS-1) (Desulfovibrio magneticus).